The sequence spans 192 residues: Orotate phosphoribosyltransferase (192 aa).

116 to 124 (EDIVTTGLS) contributes to the 5-phospho-alpha-D-ribose 1-diphosphate binding site. Positions 120 and 148 each coordinate orotate.

The protein belongs to the purine/pyrimidine phosphoribosyltransferase family. PyrE subfamily. In terms of assembly, homodimer. Mg(2+) serves as cofactor.

It catalyses the reaction orotidine 5'-phosphate + diphosphate = orotate + 5-phospho-alpha-D-ribose 1-diphosphate. It participates in pyrimidine metabolism; UMP biosynthesis via de novo pathway; UMP from orotate: step 1/2. Catalyzes the transfer of a ribosyl phosphate group from 5-phosphoribose 1-diphosphate to orotate, leading to the formation of orotidine monophosphate (OMP). This chain is Orotate phosphoribosyltransferase, found in Bartonella tribocorum (strain CIP 105476 / IBS 506).